A 299-amino-acid polypeptide reads, in one-letter code: Glutamyl-Q tRNA(Asp) synthetase (299 aa).

L-glutamate-binding positions include 18 to 22 (RFAPS) and E54. The 'HIGH' region signature appears at 21–31 (PSPSGALHFGS). Residues C110, C112, Y124, and C128 each coordinate Zn(2+). L-glutamate is bound by residues Y181 and R199. The 'KMSKS' region signature appears at 237–241 (KLSKQ). K240 is a binding site for ATP.

It belongs to the class-I aminoacyl-tRNA synthetase family. GluQ subfamily. Zn(2+) is required as a cofactor.

Its function is as follows. Catalyzes the tRNA-independent activation of glutamate in presence of ATP and the subsequent transfer of glutamate onto a tRNA(Asp). Glutamate is transferred on the 2-amino-5-(4,5-dihydroxy-2-cyclopenten-1-yl) moiety of the queuosine in the wobble position of the QUC anticodon. The protein is Glutamyl-Q tRNA(Asp) synthetase of Shewanella oneidensis (strain ATCC 700550 / JCM 31522 / CIP 106686 / LMG 19005 / NCIMB 14063 / MR-1).